The primary structure comprises 434 residues: Progestin and adipoQ receptor-like protein 1 (434 aa).

Topologically, residues 1–201 (MNPDEVNRAL…KSIWSLHTET (201 aa)) are cytoplasmic. Disordered regions lie at residues 74 to 103 (LPQQ…MPKH) and 118 to 137 (EINL…ELEV). The helical transmembrane segment at 202–222 (GNIWTHLIGCVAFFFLACWFL) threads the bilayer. Over 223–234 (TRPDNHIQFQEK) the chain is Extracellular. Residues 235–255 (VVFSFFFAGAVLCLGLSFAFH) form a helical membrane-spanning segment. The Cytoplasmic portion of the chain corresponds to 256–273 (TLSCHSVNVVKIFCKLDY). Residues 274-294 (MGISLLIIGSFIPWIYYGFYC) traverse the membrane as a helical segment. Over 295-299 (RREPK) the chain is Extracellular. The helical transmembrane segment at 300–320 (ITYIAMVSVLGIGAIVVSLWD) threads the bilayer. At 321–331 (KFSESRFRPIR) the chain is on the cytoplasmic side. A helical transmembrane segment spans residues 332 to 352 (AAVFVGMGCSGVIPTIHYIIT). Over 353–362 (DGVHSLFADN) the chain is Extracellular. Residues 363–383 (SFHWLLLMAFLYLLGAGLYAT) traverse the membrane as a helical segment. Over 384-403 (RTPERFFPGKCDIWFQSHQL) the chain is Cytoplasmic. Residues 404-424 (FHTCVVIAAFVHYYGISEMAF) form a helical membrane-spanning segment. At 425–434 (ARLNEQCPVR) the chain is on the extracellular side.

The protein belongs to the ADIPOR family.

The protein resides in the membrane. Probable receptor, which may be involved in metabolic pathways that regulate lipid metabolism such as fatty acid oxidation. In Caenorhabditis elegans, this protein is Progestin and adipoQ receptor-like protein 1 (paqr-1).